The sequence spans 207 residues: Protein 6b (207 aa).

In terms of biological role, involved in tumor formation and increases auxin and cytokinin effects in host plants. The polypeptide is Protein 6b (6b) (Agrobacterium vitis (Rhizobium vitis)).